The chain runs to 187 residues: Protein GrpE (187 aa).

The segment at 1 to 22 (MADEQNLDAQAQDQAAEAGAGD) is disordered. The span at 7–22 (LDAQAQDQAAEAGAGD) shows a compositional bias: low complexity.

The protein belongs to the GrpE family. Homodimer.

It localises to the cytoplasm. Participates actively in the response to hyperosmotic and heat shock by preventing the aggregation of stress-denatured proteins, in association with DnaK and GrpE. It is the nucleotide exchange factor for DnaK and may function as a thermosensor. Unfolded proteins bind initially to DnaJ; upon interaction with the DnaJ-bound protein, DnaK hydrolyzes its bound ATP, resulting in the formation of a stable complex. GrpE releases ADP from DnaK; ATP binding to DnaK triggers the release of the substrate protein, thus completing the reaction cycle. Several rounds of ATP-dependent interactions between DnaJ, DnaK and GrpE are required for fully efficient folding. This is Protein GrpE from Pseudomonas syringae pv. tomato (strain ATCC BAA-871 / DC3000).